A 239-amino-acid chain; its full sequence is ATP-dependent dethiobiotin synthetase BioD (239 aa).

Residue 15–20 (EIGKTF) participates in ATP binding. Mg(2+) is bound at residue threonine 19. Lysine 40 is an active-site residue. Residues aspartate 57, 118 to 121 (EGVG), and 178 to 179 (NH) each bind ATP. Residues aspartate 57 and glutamate 118 each coordinate Mg(2+).

Belongs to the dethiobiotin synthetase family. In terms of assembly, homodimer. Mg(2+) is required as a cofactor.

The protein resides in the cytoplasm. The catalysed reaction is (7R,8S)-7,8-diammoniononanoate + CO2 + ATP = (4R,5S)-dethiobiotin + ADP + phosphate + 3 H(+). It participates in cofactor biosynthesis; biotin biosynthesis; biotin from 7,8-diaminononanoate: step 1/2. In terms of biological role, catalyzes a mechanistically unusual reaction, the ATP-dependent insertion of CO2 between the N7 and N8 nitrogen atoms of 7,8-diaminopelargonic acid (DAPA, also called 7,8-diammoniononanoate) to form a ureido ring. The polypeptide is ATP-dependent dethiobiotin synthetase BioD (Burkholderia orbicola (strain MC0-3)).